Here is a 179-residue protein sequence, read N- to C-terminus: ATP synthase subunit b, chloroplastic (179 aa).

The helical transmembrane segment at 35-51 (IVILGGGIFKLGSTALS) threads the bilayer.

Belongs to the ATPase B chain family. F-type ATPases have 2 components, F(1) - the catalytic core - and F(0) - the membrane proton channel. F(1) has five subunits: alpha(3), beta(3), gamma(1), delta(1), epsilon(1). F(0) has four main subunits: a(1), b(1), b'(1) and c(10-14). The alpha and beta chains form an alternating ring which encloses part of the gamma chain. F(1) is attached to F(0) by a central stalk formed by the gamma and epsilon chains, while a peripheral stalk is formed by the delta, b and b' chains.

The protein resides in the plastid. The protein localises to the chloroplast thylakoid membrane. Functionally, f(1)F(0) ATP synthase produces ATP from ADP in the presence of a proton or sodium gradient. F-type ATPases consist of two structural domains, F(1) containing the extramembraneous catalytic core and F(0) containing the membrane proton channel, linked together by a central stalk and a peripheral stalk. During catalysis, ATP synthesis in the catalytic domain of F(1) is coupled via a rotary mechanism of the central stalk subunits to proton translocation. Component of the F(0) channel, it forms part of the peripheral stalk, linking F(1) to F(0). In Emiliania huxleyi (Coccolithophore), this protein is ATP synthase subunit b, chloroplastic.